Here is a 235-residue protein sequence, read N- to C-terminus: Thiamine-phosphate synthase (235 aa).

4-amino-2-methyl-5-(diphosphooxymethyl)pyrimidine contacts are provided by residues 50–54 (QLRDK) and N91. Residues D92 and D111 each contribute to the Mg(2+) site. S130 serves as a coordination point for 4-amino-2-methyl-5-(diphosphooxymethyl)pyrimidine. 2-[(2R,5Z)-2-carboxy-4-methylthiazol-5(2H)-ylidene]ethyl phosphate is bound at residue 160-162 (TPT). Position 163 (K163) interacts with 4-amino-2-methyl-5-(diphosphooxymethyl)pyrimidine. Residue G191 coordinates 2-[(2R,5Z)-2-carboxy-4-methylthiazol-5(2H)-ylidene]ethyl phosphate.

It belongs to the thiamine-phosphate synthase family. It depends on Mg(2+) as a cofactor.

It catalyses the reaction 2-[(2R,5Z)-2-carboxy-4-methylthiazol-5(2H)-ylidene]ethyl phosphate + 4-amino-2-methyl-5-(diphosphooxymethyl)pyrimidine + 2 H(+) = thiamine phosphate + CO2 + diphosphate. It carries out the reaction 2-(2-carboxy-4-methylthiazol-5-yl)ethyl phosphate + 4-amino-2-methyl-5-(diphosphooxymethyl)pyrimidine + 2 H(+) = thiamine phosphate + CO2 + diphosphate. The catalysed reaction is 4-methyl-5-(2-phosphooxyethyl)-thiazole + 4-amino-2-methyl-5-(diphosphooxymethyl)pyrimidine + H(+) = thiamine phosphate + diphosphate. The protein operates within cofactor biosynthesis; thiamine diphosphate biosynthesis; thiamine phosphate from 4-amino-2-methyl-5-diphosphomethylpyrimidine and 4-methyl-5-(2-phosphoethyl)-thiazole: step 1/1. Functionally, condenses 4-methyl-5-(beta-hydroxyethyl)thiazole monophosphate (THZ-P) and 2-methyl-4-amino-5-hydroxymethyl pyrimidine pyrophosphate (HMP-PP) to form thiamine monophosphate (TMP). This is Thiamine-phosphate synthase from Mycobacterium leprae (strain TN).